The sequence spans 296 residues: ATP synthase gamma chain (296 aa).

It belongs to the ATPase gamma chain family. F-type ATPases have 2 components, CF(1) - the catalytic core - and CF(0) - the membrane proton channel. CF(1) has five subunits: alpha(3), beta(3), gamma(1), delta(1), epsilon(1). CF(0) has three main subunits: a, b and c.

Its subcellular location is the cell inner membrane. Functionally, produces ATP from ADP in the presence of a proton gradient across the membrane. The gamma chain is believed to be important in regulating ATPase activity and the flow of protons through the CF(0) complex. The sequence is that of ATP synthase gamma chain from Gluconobacter oxydans (strain 621H) (Gluconobacter suboxydans).